The chain runs to 122 residues: MIQQQTMLDVADNSGAKRVMCIKVLGGTRRKYASIGDVIVVSIKEAIPQAKVKKGEVARAVIVRTAREVKRPDGSYIRFDGNSAVLINKDLEPIGTRIFGPVARELRARKFMKIISLAPEVL.

It belongs to the universal ribosomal protein uL14 family. In terms of assembly, part of the 50S ribosomal subunit. Forms a cluster with proteins L3 and L19. In the 70S ribosome, L14 and L19 interact and together make contacts with the 16S rRNA in bridges B5 and B8.

In terms of biological role, binds to 23S rRNA. Forms part of two intersubunit bridges in the 70S ribosome. This Anaeromyxobacter dehalogenans (strain 2CP-1 / ATCC BAA-258) protein is Large ribosomal subunit protein uL14.